The chain runs to 429 residues: Enolase (429 aa).

Position 163 (Gln-163) interacts with (2R)-2-phosphoglycerate. The active-site Proton donor is Glu-205. Residues Asp-242, Glu-285, and Asp-312 each coordinate Mg(2+). Residues Lys-337, Arg-366, Ser-367, and Lys-388 each coordinate (2R)-2-phosphoglycerate. Residue Lys-337 is the Proton acceptor of the active site.

Belongs to the enolase family. Mg(2+) is required as a cofactor.

The protein resides in the cytoplasm. It localises to the secreted. The protein localises to the cell surface. The enzyme catalyses (2R)-2-phosphoglycerate = phosphoenolpyruvate + H2O. The protein operates within carbohydrate degradation; glycolysis; pyruvate from D-glyceraldehyde 3-phosphate: step 4/5. Catalyzes the reversible conversion of 2-phosphoglycerate (2-PG) into phosphoenolpyruvate (PEP). It is essential for the degradation of carbohydrates via glycolysis. This is Enolase from Methylorubrum extorquens (strain PA1) (Methylobacterium extorquens).